A 354-amino-acid chain; its full sequence is Glutamine synthetase (354 aa).

The GS beta-grasp domain maps to 22 to 101 (VQAEYVWIDG…VLAETFNNDG (80 aa)). The region spanning 108–354 (HRHHTKKVMD…IIVETTVLDK (247 aa)) is the GS catalytic domain.

This sequence belongs to the glutamine synthetase family. As to quaternary structure, homooctamer.

It is found in the cytoplasm. It catalyses the reaction L-glutamate + NH4(+) + ATP = L-glutamine + ADP + phosphate + H(+). In Suillus bovinus (Jersey cow bolete), this protein is Glutamine synthetase (GLNA).